We begin with the raw amino-acid sequence, 140 residues long: 3-hydroxyacyl-[acyl-carrier-protein] dehydratase FabZ (140 aa).

Residue His-47 is part of the active site.

This sequence belongs to the thioester dehydratase family. FabZ subfamily.

It localises to the cytoplasm. The catalysed reaction is a (3R)-hydroxyacyl-[ACP] = a (2E)-enoyl-[ACP] + H2O. Its function is as follows. Involved in unsaturated fatty acids biosynthesis. Catalyzes the dehydration of short chain beta-hydroxyacyl-ACPs and long chain saturated and unsaturated beta-hydroxyacyl-ACPs. This chain is 3-hydroxyacyl-[acyl-carrier-protein] dehydratase FabZ, found in Streptococcus pneumoniae (strain 70585).